The following is a 364-amino-acid chain: Aminomethyltransferase (364 aa).

It belongs to the GcvT family. The glycine cleavage system is composed of four proteins: P, T, L and H.

The enzyme catalyses N(6)-[(R)-S(8)-aminomethyldihydrolipoyl]-L-lysyl-[protein] + (6S)-5,6,7,8-tetrahydrofolate = N(6)-[(R)-dihydrolipoyl]-L-lysyl-[protein] + (6R)-5,10-methylene-5,6,7,8-tetrahydrofolate + NH4(+). Functionally, the glycine cleavage system catalyzes the degradation of glycine. In Escherichia coli O17:K52:H18 (strain UMN026 / ExPEC), this protein is Aminomethyltransferase.